The chain runs to 475 residues: Exodeoxyribonuclease I (475 aa).

Residues 13 to 192 form the Exonuclease domain; that stretch reads FHDYETFGTH…AMADVYATIA (180 aa). Mg(2+)-binding residues include Asp15 and Glu17. Residues Glu17 and Arg165 each coordinate substrate. Residue Asp186 coordinates Mg(2+). The ExoI SH3-like domain maps to 202 to 355; it reads PRLFDYLFTH…KVVAIFAEAE (154 aa). The ExoI C-terminal domain maps to 358–475; that stretch reads TPSDNVDAQL…ALWQYAEEIV (118 aa).

Monomer. Interacts with ssb (via C-terminus); this interaction stimulates the exonuclease activity by recruiting the enzyme to its substrate. Mg(2+) serves as cofactor.

The enzyme catalyses Exonucleolytic cleavage in the 3'- to 5'-direction to yield nucleoside 5'-phosphates.. With respect to regulation, inhibited by 10 mM EDTA. Degrades single-stranded DNA (ssDNA) in a highly processive manner. Also functions as a DNA deoxyribophosphodiesterase that releases deoxyribose-phosphate moieties following the cleavage of DNA at an apurinic/apyrimidinic (AP) site by either an AP endonuclease or AP lyase. The polypeptide is Exodeoxyribonuclease I (sbcB) (Escherichia coli (strain K12)).